Reading from the N-terminus, the 93-residue chain is Ribonuclease P protein component 4 (93 aa).

Positions 55, 58, 81, and 83 each coordinate Zn(2+).

The protein belongs to the eukaryotic/archaeal RNase P protein component 4 family. In terms of assembly, consists of a catalytic RNA component and at least 4-5 protein subunits. It depends on Zn(2+) as a cofactor.

It localises to the cytoplasm. The enzyme catalyses Endonucleolytic cleavage of RNA, removing 5'-extranucleotides from tRNA precursor.. Part of ribonuclease P, a protein complex that generates mature tRNA molecules by cleaving their 5'-ends. This chain is Ribonuclease P protein component 4, found in Halobacterium salinarum (strain ATCC 29341 / DSM 671 / R1).